Here is a 542-residue protein sequence, read N- to C-terminus: T-complex protein 1 subunit delta (542 aa).

Residues 1 to 16 (MPENVAPRTGPPAGAA) are compositionally biased toward low complexity. The tract at residues 1-31 (MPENVAPRTGPPAGAAGAAGGRGKSAYQDRD) is disordered. At arginine 22 the chain carries Omega-N-methylarginine. At lysine 24 the chain carries N6-acetyllysine. The residue at position 39 (serine 39) is a Phosphoserine. Residue glycine 56 participates in ADP binding. Glycine 56 serves as a coordination point for ATP. Mg(2+) is bound at residue aspartate 107. Residues glycine 108, threonine 109, threonine 110, serine 111, asparagine 175, serine 176, and lysine 177 each contribute to the ADP site. Positions 108 and 109 each coordinate ATP. Lysine 177 is an ATP binding site. Phosphoserine occurs at positions 187 and 205. Lysine 291, lysine 305, lysine 322, and lysine 329 each carry N6-acetyllysine. Glycine 428 is a binding site for ADP. Serine 447 is modified (phosphoserine). Position 513 (glutamine 513) interacts with ADP.

This sequence belongs to the TCP-1 chaperonin family. In terms of assembly, component of the chaperonin-containing T-complex (TRiC), a hexadecamer composed of two identical back-to-back stacked rings enclosing a protein folding chamber. Each ring is made up of eight different subunits: TCP1/CCT1, CCT2, CCT3, CCT4, CCT5, CCT6A/CCT6, CCT7, CCT8. Interacts with PACRG. Interacts with DNAAF4. Interacts with DLEC1.

Its subcellular location is the cytoplasm. It is found in the melanosome. It localises to the cytoskeleton. The protein localises to the microtubule organizing center. The protein resides in the centrosome. Its subcellular location is the cilium basal body. The enzyme catalyses ATP + H2O = ADP + phosphate + H(+). Component of the chaperonin-containing T-complex (TRiC), a molecular chaperone complex that assists the folding of actin, tubulin and other proteins upon ATP hydrolysis. The TRiC complex mediates the folding of WRAP53/TCAB1, thereby regulating telomere maintenance. As part of the TRiC complex may play a role in the assembly of BBSome, a complex involved in ciliogenesis regulating transports vesicles to the cilia. The protein is T-complex protein 1 subunit delta (CCT4) of Bos taurus (Bovine).